Consider the following 349-residue polypeptide: tRNA pseudouridine synthase D (349 aa).

Phe27 serves as a coordination point for substrate. Asp80 functions as the Nucleophile in the catalytic mechanism. Asn129 serves as a coordination point for substrate. The TRUD domain maps to 155-303 (GVPNYFGAQR…VEAARRAMLL (149 aa)). Phe329 is a binding site for substrate.

Belongs to the pseudouridine synthase TruD family.

The enzyme catalyses uridine(13) in tRNA = pseudouridine(13) in tRNA. In terms of biological role, responsible for synthesis of pseudouridine from uracil-13 in transfer RNAs. This is tRNA pseudouridine synthase D from Shigella flexneri.